Here is a 374-residue protein sequence, read N- to C-terminus: tRNA-specific 2-thiouridylase MnmA (374 aa).

ATP contacts are provided by residues 17–24 and M43; that span reads GMSGGVDS. The interval 103 to 105 is interaction with target base in tRNA; it reads NPD. The active-site Nucleophile is C108. An intrachain disulfide couples C108 to C204. G132 serves as a coordination point for ATP. The tract at residues 154 to 156 is interaction with tRNA; the sequence is KDQ. The active-site Cysteine persulfide intermediate is the C204. An interaction with tRNA region spans residues 316–317; that stretch reads RY.

It belongs to the MnmA/TRMU family.

Its subcellular location is the cytoplasm. It catalyses the reaction S-sulfanyl-L-cysteinyl-[protein] + uridine(34) in tRNA + AH2 + ATP = 2-thiouridine(34) in tRNA + L-cysteinyl-[protein] + A + AMP + diphosphate + H(+). Functionally, catalyzes the 2-thiolation of uridine at the wobble position (U34) of tRNA, leading to the formation of s(2)U34. In Pseudomonas fluorescens (strain Pf0-1), this protein is tRNA-specific 2-thiouridylase MnmA.